We begin with the raw amino-acid sequence, 226 residues long: PDGF-related-transforming protein sis (226 aa).

A compositionally biased stretch (basic residues) spans 201 to 215; the sequence is RRPPKGKHRKCKHTH. Residues 201–226 are disordered; sequence RRPPKGKHRKCKHTHDKTALKETLGA.

The protein belongs to the PDGF/VEGF growth factor family.

The sequence is that of PDGF-related-transforming protein sis (V-SIS) from Woolly monkey sarcoma virus (WMSV).